The following is a 906-amino-acid chain: Cadherin-2 (906 aa).

The first 25 residues, 1–25 (MCRIVGAPRTLLPLLAALLQASVEA), serve as a signal peptide directing secretion. Residues 26-159 (SGGIALCKTG…HNGHLQRQKR (134 aa)) constitute a propeptide that is removed on maturation. Phosphoserine is present on residues S96 and S135. 5 consecutive Cadherin domains span residues 160–267 (DWVI…RPEF), 268–382 (LHQV…PPEF), 383–497 (TAMS…NPYF), 498–603 (APNP…DNAP), and 604–714 (QVVP…DVDR). At 160–724 (DWVIPPINLP…IVGAGLGTGA (565 aa)) the chain is on the extracellular side. Residue E170 participates in Ca(2+) binding. Residue N190 is glycosylated (N-linked (GlcNAc...) asparagine). Residues D226, E228, D259, M260, N261, D262, and N263 each coordinate Ca(2+). N273 is a glycosylation site (N-linked (GlcNAc...) asparagine). The Ca(2+) site is built by D293, D295, and N301. N-linked (GlcNAc...) asparagine glycosylation occurs at N325. D353 serves as a coordination point for Ca(2+). N-linked (GlcNAc...) asparagine glycans are attached at residues N402, N572, N622, N651, and N692. The chain crosses the membrane as a helical span at residues 725–745 (IIAILLCIIILLILVLMFVVW). Over 746–906 (MKRRDKERQA…LADMYGGGDD (161 aa)) the chain is Cytoplasmic. A compositionally biased stretch (low complexity) spans 863–880 (SGSTAGSLSSLNSSSSGG). Residues 863-884 (SGSTAGSLSSLNSSSSGGEQDY) are disordered.

As to quaternary structure, homodimer (via extracellular region). Can also form heterodimers with other cadherins (via extracellular region). Dimerization occurs in trans, i.e. with a cadherin chain from another cell. Interacts with CDCP1. Interacts with PCDH8; this complex may also include TAOK2. The interaction with PCDH8 may lead to internalization through TAOK2/p38 MAPK pathway. Identified in a complex containing FGFR4, NCAM1, CDH2, PLCG1, FRS2, SRC, SHC1, GAP43 and CTTN. May interact with OBSCN (via protein kinase domain 2). Interacts with FBXO45. Post-translationally, cleaved by MMP24. Ectodomain cleavage leads to the generation of a soluble 90 kDa N-terminal soluble fragment and a 45 kDa membrane-bound C-terminal fragment 1 (CTF1), which is further cleaved by gamma-secretase into a 35 kDa. Cleavage in neural stem cells by MMP24 affects CDH2-mediated anchorage of neural stem cells to ependymocytes in the adult subependymal zone, leading to modulate neural stem cell quiescence. In terms of processing, may be phosphorylated by OBSCN.

It is found in the cell membrane. The protein resides in the sarcolemma. The protein localises to the cell junction. Its subcellular location is the cell surface. It localises to the desmosome. It is found in the adherens junction. Functionally, calcium-dependent cell adhesion protein; preferentially mediates homotypic cell-cell adhesion by dimerization with a CDH2 chain from another cell. Cadherins may thus contribute to the sorting of heterogeneous cell types. Acts as a regulator of neural stem cells quiescence by mediating anchorage of neural stem cells to ependymocytes in the adult subependymal zone: upon cleavage by MMP24, CDH2-mediated anchorage is affected, leading to modulate neural stem cell quiescence. Plays a role in cell-to-cell junction formation between pancreatic beta cells and neural crest stem (NCS) cells, promoting the formation of processes by NCS cells. CDH2 may be involved in neuronal recognition mechanism. In hippocampal neurons, may regulate dendritic spine density. This Rhinolophus ferrumequinum (Greater horseshoe bat) protein is Cadherin-2 (CDH2).